The following is a 602-amino-acid chain: Glutamyl-tRNA(Gln) amidotransferase subunit B, mitochondrial (602 aa).

The N-terminal 52 residues, 1-52, are a transit peptide targeting the mitochondrion; it reads MLQQWLRQSPAAAGLLRCSRYRGPQAALLQLSPQRAPTYHAIRSLQTSAAES. Residues 61–83 are disordered; sequence QLKQGAKGLKAQKRQRRESEEAS.

It belongs to the GatB/GatE family. GatB subfamily. As to quaternary structure, subunit of the heterotrimeric GatCAB amidotransferase (AdT) complex, composed of A, B and C subunits.

It is found in the mitochondrion. It carries out the reaction L-glutamyl-tRNA(Gln) + L-glutamine + ATP + H2O = L-glutaminyl-tRNA(Gln) + L-glutamate + ADP + phosphate + H(+). Its function is as follows. Allows the formation of correctly charged Gln-tRNA(Gln) through the transamidation of misacylated Glu-tRNA(Gln) in the mitochondria. The reaction takes place in the presence of glutamine and ATP through an activated gamma-phospho-Glu-tRNA(Gln). The protein is Glutamyl-tRNA(Gln) amidotransferase subunit B, mitochondrial of Aspergillus clavatus (strain ATCC 1007 / CBS 513.65 / DSM 816 / NCTC 3887 / NRRL 1 / QM 1276 / 107).